The sequence spans 251 residues: Hydroxyacylglutathione hydrolase (251 aa).

The Zn(2+) site is built by H58, H60, D62, H63, H116, D135, and H173.

This sequence belongs to the metallo-beta-lactamase superfamily. Glyoxalase II family. Monomer. The cofactor is Zn(2+).

It catalyses the reaction an S-(2-hydroxyacyl)glutathione + H2O = a 2-hydroxy carboxylate + glutathione + H(+). Its pathway is secondary metabolite metabolism; methylglyoxal degradation; (R)-lactate from methylglyoxal: step 2/2. Its function is as follows. Thiolesterase that catalyzes the hydrolysis of S-D-lactoyl-glutathione to form glutathione and D-lactic acid. This Bdellovibrio bacteriovorus (strain ATCC 15356 / DSM 50701 / NCIMB 9529 / HD100) protein is Hydroxyacylglutathione hydrolase.